A 113-amino-acid polypeptide reads, in one-letter code: Ig heavy chain V region 36-60 (113 aa).

The polypeptide is Ig heavy chain V region 36-60 (Mus musculus (Mouse)).